The sequence spans 268 residues: Malonyl-[acyl-carrier protein] O-methyltransferase 1 (268 aa).

Belongs to the methyltransferase superfamily.

It carries out the reaction malonyl-[ACP] + S-adenosyl-L-methionine = malonyl-[ACP] methyl ester + S-adenosyl-L-homocysteine. It functions in the pathway cofactor biosynthesis; biotin biosynthesis. Converts the free carboxyl group of a malonyl-thioester to its methyl ester by transfer of a methyl group from S-adenosyl-L-methionine (SAM). It allows to synthesize pimeloyl-ACP via the fatty acid synthetic pathway. This Ilyobacter polytropus (strain ATCC 51220 / DSM 2926 / LMG 16218 / CuHBu1) protein is Malonyl-[acyl-carrier protein] O-methyltransferase 1.